Consider the following 621-residue polypeptide: Na(+)/H(+) antiporter NhaA (621 aa).

Positions 1 to 430 (MPASSFGESS…LGWLIFKVAA (430 aa)) are na(+)/H(+) antiporter NhaA. The next 11 helical transmembrane spans lie at 27–47 (GAAVLLVIVTVVALVWANSPL), 72–92 (LHHWVNDGLMVVFFFLIGLEV), 109–129 (LALIAGVTGVVLPALVYVLIV), 139–159 (GWGAVVGTDTAFMLGTLAIVG), 168–188 (VFLLTLTVVDDFLAVSIIGIV), 192–212 (EIRIVPLLIALASLVGLWLLG), 223–243 (VLIVIVLWFATVYSGIHASLA), 300–320 (FLRLPTALLIVPIFALANAGV), 339–359 (VIAGLVLGKLLGIGLTTLVAV), 375–395 (VFGGAALSGIGFTVSLLIIGL), and 409–429 (VGVLVSMVFATLLGWLIFKVA). The Thioredoxin domain maps to 431 to 578 (QRWGEKTADL…VERDLASAVA (148 aa)).

It in the N-terminal section; belongs to the NhaA Na(+)/H(+) (TC 2.A.33) antiporter family.

It localises to the cell inner membrane. It catalyses the reaction Na(+)(in) + 2 H(+)(out) = Na(+)(out) + 2 H(+)(in). Functionally, na(+)/H(+) antiporter that extrudes sodium in exchange for external protons. This Herminiimonas arsenicoxydans protein is Na(+)/H(+) antiporter NhaA.